Here is a 29-residue protein sequence, read N- to C-terminus: Dermaseptin-J9 (29 aa).

Expressed by the skin glands.

The protein resides in the secreted. Its function is as follows. Has antimicrobial activity. The sequence is that of Dermaseptin-J9 from Phasmahyla jandaia (Jandaia leaf frog).